We begin with the raw amino-acid sequence, 377 residues long: Benzylmalonyl-CoA dehydrogenase (377 aa).

Residues 123 to 132 (ICMTEPNAGS), 156 to 158 (WIT), R266, Q277, and 363 to 365 (TSE) each bind FAD.

The protein belongs to the acyl-CoA dehydrogenase family. In terms of assembly, homotetramer. The cofactor is FAD.

It catalyses the reaction (2-aminobenzyl)malonyl-CoA + O2 + H(+) = (E)-2-aminocinnamoyl-CoA + H2O2 + CO2. The catalysed reaction is benzylmalonyl-CoA + O2 + H(+) = (E)-cinnamoyl-CoA + H2O2 + CO2. Involved in degradation of indoleacetate, the most common member of the auxin class of plant hormones. Catalyzes the irreversible oxidative decarboxylation of (2-aminobenzyl)malonyl-CoA to 2-aminocinnamoyl-CoA and CO(2). In vitro, shows high catalytic efficiency with benzylmalonyl-CoA, a chemical analog of the physiological substrate, but otherwise accepts only a few medium-chain alkylmalonyl-CoA compounds as alternative substrates with low activities. The polypeptide is Benzylmalonyl-CoA dehydrogenase (Aromatoleum aromaticum (strain DSM 19018 / LMG 30748 / EbN1) (Azoarcus sp. (strain EbN1))).